The following is a 186-amino-acid chain: Peptidyl-tRNA hydrolase (186 aa).

Residue Tyr16 coordinates tRNA. Residue His21 is the Proton acceptor of the active site. TRNA contacts are provided by Tyr60 and Asn62.

The protein belongs to the PTH family. Monomer.

The protein resides in the cytoplasm. The catalysed reaction is an N-acyl-L-alpha-aminoacyl-tRNA + H2O = an N-acyl-L-amino acid + a tRNA + H(+). Hydrolyzes ribosome-free peptidyl-tRNAs (with 1 or more amino acids incorporated), which drop off the ribosome during protein synthesis, or as a result of ribosome stalling. Its function is as follows. Catalyzes the release of premature peptidyl moieties from peptidyl-tRNA molecules trapped in stalled 50S ribosomal subunits, and thus maintains levels of free tRNAs and 50S ribosomes. The chain is Peptidyl-tRNA hydrolase from Tropheryma whipplei (strain Twist) (Whipple's bacillus).